Consider the following 1520-residue polypeptide: DNA-directed RNA polymerase subunit beta'' (1520 aa).

Zn(2+) contacts are provided by Cys220, Cys296, Cys303, and Cys306. Basic and acidic residues-rich tracts occupy residues 645 to 654 (TREEEYRTRE) and 664 to 674 (PENKYRTREGE). Disordered stretches follow at residues 645-676 (TREEEYRTREEDSEDEYESPENKYRTREGEGE) and 705-786 (YRTL…KKEG). Acidic residues-rich tracts occupy residues 730-748 (GEYEILEEDSEEEYGSSED) and 756-779 (TLEEDSEEDSEEDSEDEYGSPEED).

The protein belongs to the RNA polymerase beta' chain family. RpoC2 subfamily. As to quaternary structure, in plastids the minimal PEP RNA polymerase catalytic core is composed of four subunits: alpha, beta, beta', and beta''. When a (nuclear-encoded) sigma factor is associated with the core the holoenzyme is formed, which can initiate transcription. Zn(2+) is required as a cofactor.

The protein localises to the plastid. The protein resides in the chloroplast. It catalyses the reaction RNA(n) + a ribonucleoside 5'-triphosphate = RNA(n+1) + diphosphate. Its function is as follows. DNA-dependent RNA polymerase catalyzes the transcription of DNA into RNA using the four ribonucleoside triphosphates as substrates. The protein is DNA-directed RNA polymerase subunit beta'' of Sorghum bicolor (Sorghum).